The chain runs to 276 residues: Probable endonuclease 4 (276 aa).

His67, His107, Glu142, Asp176, His179, His211, Asp224, His226, and Glu256 together coordinate Zn(2+).

The protein belongs to the AP endonuclease 2 family. Zn(2+) is required as a cofactor.

The enzyme catalyses Endonucleolytic cleavage to 5'-phosphooligonucleotide end-products.. In terms of biological role, endonuclease IV plays a role in DNA repair. It cleaves phosphodiester bonds at apurinic or apyrimidinic (AP) sites, generating a 3'-hydroxyl group and a 5'-terminal sugar phosphate. This Methanosphaera stadtmanae (strain ATCC 43021 / DSM 3091 / JCM 11832 / MCB-3) protein is Probable endonuclease 4.